We begin with the raw amino-acid sequence, 988 residues long: Echinoderm microtubule-associated protein-like 4 (988 aa).

Methionine 1 bears the N-acetylmethionine mark. Residues 1 to 260 (MDGFAGSLDD…IPSDVDNYDD (260 aa)) form a microtubule-binding region. Phosphoserine occurs at positions 7, 13, 16, 61, and 79. Positions 14–63 (AASTSDVQDRLSALESRVQQQEDEITVLKAALADVLRRLAISEDHVASVK) form a coiled coil. Threonine 96 carries the phosphothreonine modification. The segment at 106–194 (TLSSAAKSGT…WENSDDSRNK (89 aa)) is disordered. Over residues 114 to 134 (GTEKKKEKPQGQREKKEDSHS) the composition is skewed to basic and acidic residues. Serine 134 bears the Phosphoserine; by NEK7 mark. A compositionally biased stretch (low complexity) spans 137–155 (QSPQIRASPSPQPSSQPLQ). Serine 144 is modified (phosphoserine; by NEK6). Serine 146 carries the post-translational modification Phosphoserine; by NEK7. Positions 156–168 (INRQTPESKSSAP) are enriched in polar residues. Residue serine 171 is modified to Phosphoserine. A compositionally biased stretch (basic and acidic residues) spans 176–193 (PTAEKSHNSWENSDDSRN). Serine 200 is modified (phosphoserine). Threonine 201 carries the post-translational modification Phosphothreonine. At tyrosine 237 the chain carries Phosphotyrosine. Phosphothreonine is present on threonine 248. 13 WD repeats span residues 270-308 (LKLE…LFNY), 312-359 (TQRH…VWDS), 367-407 (VIGL…VWDW), 414-449 (AEIK…FWTW), 456-495 (RKQG…IWSK), 511-549 (QINR…LWDH), 554-590 (EREI…LRGT), 593-632 (DGFQ…MWNS), 636-673 (RLEW…VLDA), 679-715 (VSIH…LYTV), 722-761 (YSRY…YWDI), 771-829 (RSDC…LFQY), and 836-875 (APSH…QWKL). At threonine 620 the chain carries Phosphothreonine; by NEK6 and NEK7. The disordered stretch occupies residues 887–988 (ITDASVTKTP…EEERGITPLC (102 aa)). The segment covering 890 to 904 (ASVTKTPASSSETAR) has biased composition (polar residues). Phosphoserine occurs at positions 906, 908, and 914. The segment covering 927 to 939 (MGSSPTLVENSLE) has biased composition (polar residues). The span at 944-953 (PSEEQSEWGS) shows a compositional bias: acidic residues.

Belongs to the WD repeat EMAP family. In terms of assembly, homotrimer; self-association is mediated by the N-terminal coiled coil. Interacts (via WD repeats) with NUDC. Interacts with alpha- and beta-tubulin during mitosis. Post-translationally, phosphorylated during mitosis. Phosphorylation at Ser-144 and Ser-146 promotes its dissociation from microtubules during mitosis which is required for efficient chromosome congression.

It is found in the cytoplasm. The protein resides in the cytoskeleton. It localises to the spindle. The protein localises to the microtubule organizing center. Its subcellular location is the midbody. In terms of biological role, essential for the stability of microtubules (MTs). Essential for the formation of MTs. Required for the organization of the mitotic spindle and for the proper attachment of kinetochores to MTs. Promotes the recruitment of NUDC to the mitotic spindle for mitotic progression. This is Echinoderm microtubule-associated protein-like 4 (Eml4) from Mus musculus (Mouse).